The following is a 903-amino-acid chain: Ras and Rab interactor 2 (903 aa).

Positions Asn44–Arg73 are disordered. The span at Arg56–Arg73 shows a compositional bias: basic and acidic residues. Residues Trp97–Tyr190 form the SH2 domain. Disordered stretches follow at residues Gln282–Arg455 and Glu471–Lys491. Pro residues predominate over residues Ser306–Ala315. The segment covering Ser318–Val338 has biased composition (polar residues). Ser366 is modified (phosphoserine). The span at Ala419–Cys431 shows a compositional bias: pro residues. The span at Ser439 to Ser450 shows a compositional bias: low complexity. The interval Leu506–Asp775 is interaction with RAB5B. Ser510 is modified (phosphoserine). Residue Thr518 is modified to Phosphothreonine. In terms of domain architecture, VPS9 spans Asp627–Ala766. The Ras-associating domain occupies Phe796–Ser887.

The protein belongs to the RIN (Ras interaction/interference) family. Homotetramer; probably composed of anti-parallel linkage of two parallel dimers. Interacts with Ras. Interacts with RAB5B, with a much higher affinity for GTP-bound activated RAB5B. Does not interact with other members of the Rab family.

It localises to the cytoplasm. Functionally, ras effector protein. May function as an upstream activator and/or downstream effector for RAB5B in endocytic pathway. May function as a guanine nucleotide exchange (GEF) of RAB5B, required for activating the RAB5 proteins by exchanging bound GDP for free GTP. In Mus musculus (Mouse), this protein is Ras and Rab interactor 2 (Rin2).